The following is a 171-amino-acid chain: N5-carboxyaminoimidazole ribonucleotide mutase (171 aa).

Substrate is bound by residues Ser-13, Asp-16, and Arg-43.

This sequence belongs to the AIR carboxylase family. Class I subfamily.

The enzyme catalyses 5-carboxyamino-1-(5-phospho-D-ribosyl)imidazole + H(+) = 5-amino-1-(5-phospho-D-ribosyl)imidazole-4-carboxylate. It participates in purine metabolism; IMP biosynthesis via de novo pathway; 5-amino-1-(5-phospho-D-ribosyl)imidazole-4-carboxylate from 5-amino-1-(5-phospho-D-ribosyl)imidazole (N5-CAIR route): step 2/2. Catalyzes the conversion of N5-carboxyaminoimidazole ribonucleotide (N5-CAIR) to 4-carboxy-5-aminoimidazole ribonucleotide (CAIR). This chain is N5-carboxyaminoimidazole ribonucleotide mutase, found in Mycobacterium leprae (strain TN).